We begin with the raw amino-acid sequence, 219 residues long: Ribose-5-phosphate isomerase A (219 aa).

Residues threonine 28–threonine 31, aspartate 81–aspartate 84, and lysine 94–glycine 97 each bind substrate. Catalysis depends on glutamate 103, which acts as the Proton acceptor. Lysine 121 is a substrate binding site.

The protein belongs to the ribose 5-phosphate isomerase family. In terms of assembly, homodimer.

The enzyme catalyses aldehydo-D-ribose 5-phosphate = D-ribulose 5-phosphate. Its pathway is carbohydrate degradation; pentose phosphate pathway; D-ribose 5-phosphate from D-ribulose 5-phosphate (non-oxidative stage): step 1/1. Functionally, catalyzes the reversible conversion of ribose-5-phosphate to ribulose 5-phosphate. This chain is Ribose-5-phosphate isomerase A, found in Salmonella arizonae (strain ATCC BAA-731 / CDC346-86 / RSK2980).